A 174-amino-acid polypeptide reads, in one-letter code: MDIYIHGYLICLLLFLFRSETACHPLGKRRCEMQAFRIWDVNQKIFYLRNNQLVAGYLQGPNTKLEEKIDVVPIEPHTMFLGIHGGKLCLACVKSGDEIKLKLEAVNITDLNQNREQDKRFAFIRFDNGPTTSFESAACPGWFLCTSLEADQPVGLTNMPTEALKVTKFYFQQD.

The signal sequence occupies residues 1-23 (MDIYIHGYLICLLLFLFRSETAC). A disulfide bridge connects residues Cys89 and Cys139. N-linked (GlcNAc...) asparagine glycosylation occurs at Asn107.

The protein belongs to the IL-1 family.

The protein localises to the secreted. Functionally, anti-inflammatory antagonist of interleukin-1 family of proinflammatory cytokines such as interleukin-1beta/IL1B and interleukin-1alpha/IL1A. Protects from immune dysregulation and uncontrolled systemic inflammation triggered by IL1 for a range of innate stimulatory agents such as pathogens. This Bos taurus (Bovine) protein is Interleukin-1 receptor antagonist protein (IL1RN).